A 322-amino-acid chain; its full sequence is HPr kinase/phosphorylase (322 aa).

Active-site residues include His146 and Lys167. 161–168 (GDSGLGKS) provides a ligand contact to ATP. Ser168 serves as a coordination point for Mg(2+). Catalysis depends on Asp185, which acts as the Proton acceptor; for phosphorylation activity. Proton donor; for dephosphorylation activity. Residues 209–218 (LEVRGLGLLD) form an important for the catalytic mechanism of both phosphorylation and dephosphorylation region. A Mg(2+)-binding site is contributed by Glu210. Arg250 is an active-site residue. The tract at residues 271-276 (QVAAGR) is important for the catalytic mechanism of dephosphorylation.

It belongs to the HPrK/P family. In terms of assembly, homohexamer. Mg(2+) is required as a cofactor.

The catalysed reaction is [HPr protein]-L-serine + ATP = [HPr protein]-O-phospho-L-serine + ADP + H(+). The enzyme catalyses [HPr protein]-O-phospho-L-serine + phosphate + H(+) = [HPr protein]-L-serine + diphosphate. Functionally, catalyzes the ATP- as well as the pyrophosphate-dependent phosphorylation of a specific serine residue in HPr, a phosphocarrier protein of the phosphoenolpyruvate-dependent sugar phosphotransferase system (PTS). HprK/P also catalyzes the pyrophosphate-producing, inorganic phosphate-dependent dephosphorylation (phosphorolysis) of seryl-phosphorylated HPr (P-Ser-HPr). The polypeptide is HPr kinase/phosphorylase (Burkholderia lata (strain ATCC 17760 / DSM 23089 / LMG 22485 / NCIMB 9086 / R18194 / 383)).